A 340-amino-acid polypeptide reads, in one-letter code: Peroxisomal adenine nucleotide transporter 1 (340 aa).

3 Solcar repeats span residues glutamate 4 to histidine 119, phenylalanine 133 to alanine 218, and leucine 236 to methionine 320. Transmembrane regions (helical) follow at residues alanine 6–alanine 26, glycine 96–valine 116, leucine 139–valine 159, glycine 190–alanine 210, phenylalanine 242–alanine 262, and tryptophan 293–phenylalanine 313.

It belongs to the mitochondrial carrier (TC 2.A.29) family.

It localises to the peroxisome membrane. Its function is as follows. Adenine nucleotide transporter involved in the uniport of ATP and adenine nucleotide hetero-exchange transport between the cytosol and the peroxisomal lumen. This transport is accompanied by a proton transport from the peroxisomal lumen to the cytosol. Transport of ATP into the peroxisome is required for beta-oxidation of medium-chain fatty acids. This is Peroxisomal adenine nucleotide transporter 1 (ANT1) from Eremothecium gossypii (strain ATCC 10895 / CBS 109.51 / FGSC 9923 / NRRL Y-1056) (Yeast).